A 368-amino-acid polypeptide reads, in one-letter code: Large ribosomal subunit protein bL27m (368 aa).

The transit peptide at 1–20 (MFSGLHTSKYACQVVVQIRT) directs the protein to the mitochondrion. A disordered region spans residues 23–44 (KRAAGSRTSMKDSAGRRLGPKK). A compositionally biased stretch (basic and acidic residues) spans 31 to 44 (SMKDSAGRRLGPKK).

This sequence belongs to the bacterial ribosomal protein bL27 family.

It is found in the mitochondrion. Functionally, component of the large subunit of mitochondrial ribosome. The polypeptide is Large ribosomal subunit protein bL27m (MRPL2) (Candida glabrata (strain ATCC 2001 / BCRC 20586 / JCM 3761 / NBRC 0622 / NRRL Y-65 / CBS 138) (Yeast)).